The primary structure comprises 377 residues: Dihydroorotate dehydrogenase (quinone) (377 aa).

Residues 68-72 (AGFDK) and Thr-92 contribute to the FMN site. Lys-72 is a substrate binding site. 117 to 121 (NRMGF) is a substrate binding site. The FMN site is built by Asn-149 and Asn-182. Residue Asn-182 coordinates substrate. Ser-185 functions as the Nucleophile in the catalytic mechanism. Asn-187 serves as a coordination point for substrate. FMN contacts are provided by Lys-224 and Thr-252. 253-254 (NT) serves as a coordination point for substrate. FMN is bound by residues Gly-278, Gly-307, and 328–329 (YT).

It belongs to the dihydroorotate dehydrogenase family. Type 2 subfamily. As to quaternary structure, monomer. FMN serves as cofactor.

Its subcellular location is the cell membrane. It catalyses the reaction (S)-dihydroorotate + a quinone = orotate + a quinol. It participates in pyrimidine metabolism; UMP biosynthesis via de novo pathway; orotate from (S)-dihydroorotate (quinone route): step 1/1. Its function is as follows. Catalyzes the conversion of dihydroorotate to orotate with quinone as electron acceptor. The protein is Dihydroorotate dehydrogenase (quinone) of Thermobifida fusca (strain YX).